Reading from the N-terminus, the 580-residue chain is Long-chain-fatty-acid--AMP ligase FadD28 (580 aa).

The disordered stretch occupies residues 421-440 (SERTFGGKIVTPSPGTPEGP).

It belongs to the ATP-dependent AMP-binding enzyme family.

The catalysed reaction is holo-[mycocerosate synthase] + a long-chain fatty acid + ATP = a long-chain fatty acyl-[mycocerosate synthase] + AMP + diphosphate. It catalyses the reaction a long-chain fatty acid + ATP + H(+) = a long-chain fatty acyl-AMP + diphosphate. It carries out the reaction holo-[mycocerosate synthase] + a long-chain fatty acyl-AMP = a long-chain fatty acyl-[mycocerosate synthase] + AMP + H(+). The protein operates within lipid metabolism; fatty acid biosynthesis. In terms of biological role, involved in the biosynthesis of phthiocerol dimycocerosate (PDIM), a cell wall-associated lipid found only in pathogenic mycobacteria. Catalyzes the activation of long-chain fatty acids as acyl-adenylates (acyl-AMP), which are then transferred to the multifunctional polyketide synthase Mas for further chain extension. The polypeptide is Long-chain-fatty-acid--AMP ligase FadD28 (fadD28) (Mycobacterium bovis (strain ATCC BAA-935 / AF2122/97)).